A 355-amino-acid chain; its full sequence is Probable tRNA-dihydrouridine synthase 1 (355 aa).

FMN is bound by residues 48-50 (PLS) and Q102. Residue C132 is the Proton donor of the active site. FMN contacts are provided by residues K171, 232–234 (NGD), and 256–257 (SR).

It belongs to the Dus family. Requires FMN as cofactor.

It carries out the reaction a 5,6-dihydrouridine in tRNA + NAD(+) = a uridine in tRNA + NADH + H(+). The catalysed reaction is a 5,6-dihydrouridine in tRNA + NADP(+) = a uridine in tRNA + NADPH + H(+). Catalyzes the synthesis of 5,6-dihydrouridine (D), a modified base found in the D-loop of most tRNAs, via the reduction of the C5-C6 double bond in target uridines. This is Probable tRNA-dihydrouridine synthase 1 (dus1) from Synechocystis sp. (strain ATCC 27184 / PCC 6803 / Kazusa).